We begin with the raw amino-acid sequence, 1699 residues long: MILDTDYITEDGKPVIRVFKKENGEFKIEYDRNFEPYFYALLKDDSAIEEVKKITAKRHGTVVKVKRAEKVKKKFLGRPIEVWKLYFTHPQDVPAIRDKIREHPAVIDIYEYDIPFAKRYLIDKGLIPMEGDEKLKMLAFDIETLYHEGEEFAEGPILMISYADEEGARVITWKKVDLPYVDVVSTEKEMIKRFLRVVKEKDPDVLITYNGDNFDFAYLKRRSEKLGVKFILGRDGSEPKIQRMGDRFAVEVKGRIHFDLYPVIRRTINLPTYTLEAVYEAIFGKPKEKVYAEEIATAWETGEGLERVARYSMEDAKVTFELGKEFFPMEAQLSRLIGQSLWDVSRSSTGNLVEWFLLRKAYERNELAPNKPDERELARRRQSYAGGYVKEPERGLWNNIVYLDFRSLYPSIIITHNVSPDTLNREGCKEYDVAPQVGHKFCKDFPGFIPSLLGDLLEERQKIKRKMRATIDPVEKKLLDYRQRAIKILANSILPDEWLPLLVNGRLKLVRIGDFVDNTMKKGQPLENDGTEVLEVSGIEAISFNRKTKIAEIKPVKALIRHRYRGKVYDIKLSSGRNIKVTEGHSLFAFRDGELVEVTGGEIKPGDFIAVPRRVNLPERHERINLIEILLGLPPEETSDIVLTIPVKGRKNFFKGMLRTLRWIFEEEQRPRTARRYLEHLQKLGYVKLMKRAYEIVNKEALRNYRKLYEVLAERVKYNGNKREYLVHFNDLRNEIKFMPDEELEEWKVGTLNGFRMEPFIEVGEDFAKLLGYYVSEGYARKQRNQKNGWSYSVKIYNNDQRVLDDMEKLASKFFGRVRRGKNYVEISRKMAYVLFESLCGTLAENKRVPEVIFTSPESVRWAFFEGYFIGDGDLHPSKRVRLSTKSEELVNGLVVLLNSLGISAIKIRFDSGVYRVLVNEELPFLGNRKRKNAYYSHVIPKEILEETFGKQFQKNMSPAKLNEKVEKGELDAGKARRIAWLLEGDIVLDRVEKVTVEDYEGYVYDLSVEENENFLAGFGMLYAHNSYYGYYGYAKARWYCRECAESVTAWGRSYIETTIREIEEKFGFKVLYADSVAGNTEVIIRRNGKVEFVPIEKLFQRVDYRIGEKEYCALEGVEALTLDNRGRLVWRKVPYIMRHKTNKKIYRVWFTNSWYLDVTEDHSLIGYLNTSKVKSEKPLKERLVEVKPRELGEKVKSLITLNRAIARSIKANPIAVRLWELIGLLVGDGNWGGHSKWAKYYVGLSCGLDKAEIEEKVLRPLKEAGIISNYYGKSKKGDVSILSKWLAGFMVKYFKDENGNKRIPSFMFNLPREYIEAFLRGLFSADGTVSLRRGIPEIRLTSVNRELSNEVRKLLWLVGVSNSMFTETTPNKYLGNESGTRSIHVRIKNKHRFAKRIGFLLDRKATKLSDNLREHTNKKMAYRYDFDLVYPKKIEEINYDRYVYDIEVEGTHRFFANGILVHNTDGFFATIPGADAETVKKKAMEFLKYINAKLPGLLELEYEGFYVRGFFVTKKKYAVIDEEGKITTRGLEIVRRDWSEIAKETQARVLEAILKHGDVEEAVRIVKEVTEKLSKYEVPPEKLVIHEQITRDLKDYKATGPHVAVAKRLAARGIKIRPGTVISYIVLKGSGRIGDRAIPFDEFDPAKHKYDAEYYIENQVLPAVERILRAFGYRKEDLRYQKTKQVGLGAWLKVKGKK.

DOD-type homing endonuclease domains lie at 770-903 (LLGY…SLGI) and 1222-1361 (LIGL…LVGV).

It belongs to the DNA polymerase type-B family. Post-translationally, this protein undergoes a protein self splicing that involves a post-translational excision of the intervening region (intein) followed by peptide ligation.

It carries out the reaction DNA(n) + a 2'-deoxyribonucleoside 5'-triphosphate = DNA(n+1) + diphosphate. In addition to polymerase activity, this DNA polymerase exhibits 3' to 5' exonuclease activity. Its function is as follows. PI-TspGE8I and PI-TspGE8II are endonucleases. This Thermococcus sp. (strain GE8) protein is DNA polymerase (pol).